A 62-amino-acid chain; its full sequence is Cytotoxin 7 (62 aa).

The signal sequence occupies residues 1-2; the sequence is YT. 4 disulfides stabilise this stretch: Cys5–Cys23, Cys16–Cys40, Cys44–Cys55, and Cys56–Cys61.

It belongs to the three-finger toxin family. Short-chain subfamily. Type IA cytotoxin sub-subfamily. As to quaternary structure, monomer in solution; Homodimer and oligomer in the presence of negatively charged lipids forming a pore with a size ranging between 20 and 30 Angstroms. As to expression, expressed by the venom gland.

It localises to the secreted. Its subcellular location is the target cell membrane. Shows cytolytic activity on many different cells by forming pore in lipid membranes. In vivo, increases heart rate or kills the animal by cardiac arrest. In addition, it binds to heparin with high affinity, interacts with Kv channel-interacting protein 1 (KCNIP1) in a calcium-independent manner, and binds to integrin alpha-V/beta-3 (ITGAV/ITGB3) with moderate affinity. In Naja sputatrix (Malayan spitting cobra), this protein is Cytotoxin 7.